A 367-amino-acid chain; its full sequence is Peptide chain release factor 1 (367 aa).

Glutamine 238 carries the N5-methylglutamine modification.

This sequence belongs to the prokaryotic/mitochondrial release factor family. In terms of processing, methylated by PrmC. Methylation increases the termination efficiency of RF1.

The protein localises to the cytoplasm. Functionally, peptide chain release factor 1 directs the termination of translation in response to the peptide chain termination codons UAG and UAA. The sequence is that of Peptide chain release factor 1 from Dictyoglomus thermophilum (strain ATCC 35947 / DSM 3960 / H-6-12).